A 717-amino-acid polypeptide reads, in one-letter code: Serologically defined colon cancer antigen 8 homolog (717 aa).

Residues Ser-4 and Ser-28 each carry the phosphoserine modification. Residues 84-115 are disordered; sequence QTNKENETSPPRRRKLSPSRPSECDDGSMPTM. 4 coiled-coil regions span residues 129 to 168, 221 to 278, 352 to 590, and 622 to 712; these read IHHL…KSQR, DANK…LAAS, EEAN…SEQY, and RSQI…LPSM. Residues 216–717 are sufficient for homodimerization; sequence TASTGDANKW…QLPSMPQSDC (502 aa).

As to quaternary structure, homodimer. Interacts with OFD1; the interaction is direct. Interacts with FAM161A. Interacts with RABEP2, ERC1 and CEP131. Expressed in liver, kidney, spleen, brain, heart and muscle. Expressed in photoreceptor cells of the retina.

Its subcellular location is the cytoplasm. The protein resides in the cytoskeleton. The protein localises to the microtubule organizing center. It is found in the centrosome. It localises to the centriole. Its subcellular location is the cilium basal body. The protein resides in the cell junction. Functionally, plays a role in the establishment of cell polarity and epithelial lumen formation. Also plays an essential role in ciliogenesis and subsequent Hedgehog signaling pathway that requires the presence of intact primary cilia for pathway activation. Mechanistically, interacts with and mediates RABEP2 centrosomal localization which is critical for ciliogenesis. This Mus musculus (Mouse) protein is Serologically defined colon cancer antigen 8 homolog (Sdccag8).